Here is a 61-residue protein sequence, read N- to C-terminus: UPF0391 membrane protein Ajs_0703 (61 aa).

Helical transmembrane passes span A5 to A25 and V33 to I53.

The protein belongs to the UPF0391 family.

It localises to the cell membrane. This is UPF0391 membrane protein Ajs_0703 from Acidovorax sp. (strain JS42).